We begin with the raw amino-acid sequence, 134 residues long: Complexin-1 (134 aa).

Disordered regions lie at residues 1 to 60 and 74 to 114; these read MEFV…AERE and KKEE…EEDE. Basic and acidic residues predominate over residues 15-60; the sequence is DMGKMLGGDEEKDPDAAKKEEERQEALRQAEEERKAKYAKMEAERE. Positions 29-64 form a coiled coil; it reads DAAKKEEERQEALRQAEEERKAKYAKMEAEREVMRQ. The interaction with the SNARE complex stretch occupies residues 48–70; the sequence is RKAKYAKMEAEREVMRQGIRDKY.

Belongs to the complexin/synaphin family. As to quaternary structure, binds to the SNARE core complex containing SNAP25, VAMP2 and STX1A. As to expression, nervous system, and pancreatic islet cells. Present in many brain regions, including hippocampus and cerebellum. In the retina, present at conventional amacrine cell synapses (at protein level).

It localises to the cytoplasm. The protein localises to the cytosol. It is found in the perikaryon. Its subcellular location is the presynapse. In terms of biological role, positively regulates a late step in exocytosis of various cytoplasmic vesicles, such as synaptic vesicles and other secretory vesicles. Organizes the SNAREs into a cross-linked zigzag topology that, when interposed between the vesicle and plasma membranes, is incompatible with fusion, thereby preventing SNAREs from releasing neurotransmitters until an action potential arrives at the synapse. Also involved in glucose-induced secretion of insulin by pancreatic beta-cells. Essential for motor behavior. The polypeptide is Complexin-1 (Cplx1) (Mus musculus (Mouse)).